The sequence spans 496 residues: COP9 signalosome complex subunit 3 (496 aa).

One can recognise a PCI domain in the interval 243–411 (QASHCLGIVI…GNETTTMLRF (169 aa)). A disordered region spans residues 468–496 (GSSERSGVVGSTEADGGGDLDEDLMGDGR). The segment covering 483-496 (GGGDLDEDLMGDGR) has biased composition (acidic residues).

Belongs to the CSN3 family. As to quaternary structure, component of the COP9 signalosome (CSN) complex.

The protein localises to the cytoplasm. It localises to the nucleus. In terms of biological role, component of the COP9 signalosome (CSN) complex that acts as an regulator of the ubiquitin (Ubl) conjugation pathway by mediating the deneddylation of the cullin subunit of SCF-type E3 ubiquitin-protein ligase complexes. The CSN complex seems to link protein degradation to sexual development. This chain is COP9 signalosome complex subunit 3 (csnC), found in Emericella nidulans (strain FGSC A4 / ATCC 38163 / CBS 112.46 / NRRL 194 / M139) (Aspergillus nidulans).